The primary structure comprises 213 residues: MLRIGLTGGIGSGKTRVADKLGEWGAAVIDTDAIAHALTQADGLAMPAIIQAFGPEAVRADGAMDRAWVRNRVFREPQARACLEAILHPLIGQETQAAAERAVGSYLVFVVPLLVESGRWRGQLDRICVVDCDPETQIKRVQNRSGLTESDIRRIMDAQAARATRLKAADDVIVNDGSTTAEVLLARARSLHQSYLALADKHDRHGSTEAGPP.

The DPCK domain occupies 3–202; it reads RIGLTGGIGS…QSYLALADKH (200 aa). 11 to 16 serves as a coordination point for ATP; the sequence is GSGKTR.

The protein belongs to the CoaE family.

The protein resides in the cytoplasm. The catalysed reaction is 3'-dephospho-CoA + ATP = ADP + CoA + H(+). It participates in cofactor biosynthesis; coenzyme A biosynthesis; CoA from (R)-pantothenate: step 5/5. Its function is as follows. Catalyzes the phosphorylation of the 3'-hydroxyl group of dephosphocoenzyme A to form coenzyme A. The polypeptide is Dephospho-CoA kinase (Bordetella avium (strain 197N)).